Here is a 283-residue protein sequence, read N- to C-terminus: 4-diphosphocytidyl-2-C-methyl-D-erythritol kinase (283 aa).

Lys10 is a catalytic residue. Pro99–Ser109 serves as a coordination point for ATP. Residue Asp141 is part of the active site.

The protein belongs to the GHMP kinase family. IspE subfamily. In terms of assembly, homodimer.

The enzyme catalyses 4-CDP-2-C-methyl-D-erythritol + ATP = 4-CDP-2-C-methyl-D-erythritol 2-phosphate + ADP + H(+). The protein operates within isoprenoid biosynthesis; isopentenyl diphosphate biosynthesis via DXP pathway; isopentenyl diphosphate from 1-deoxy-D-xylulose 5-phosphate: step 3/6. Its function is as follows. Catalyzes the phosphorylation of the position 2 hydroxy group of 4-diphosphocytidyl-2C-methyl-D-erythritol. This is 4-diphosphocytidyl-2-C-methyl-D-erythritol kinase from Escherichia coli O9:H4 (strain HS).